The primary structure comprises 131 residues: Small ribosomal subunit protein uS8 (131 aa).

It belongs to the universal ribosomal protein uS8 family. As to quaternary structure, part of the 30S ribosomal subunit. Contacts proteins S5 and S12.

Functionally, one of the primary rRNA binding proteins, it binds directly to 16S rRNA central domain where it helps coordinate assembly of the platform of the 30S subunit. In Blochmanniella pennsylvanica (strain BPEN), this protein is Small ribosomal subunit protein uS8.